Reading from the N-terminus, the 257-residue chain is Large ribosomal subunit protein uL2 (257 aa).

Positions 207-231 (VEHPFGGGNHQHIGKPSTIRRDAPA) are disordered.

Belongs to the universal ribosomal protein uL2 family. Component of the large ribosomal subunit.

It is found in the cytoplasm. Its function is as follows. Component of the large ribosomal subunit. The ribosome is a large ribonucleoprotein complex responsible for the synthesis of proteins in the cell. This Xenopus laevis (African clawed frog) protein is Large ribosomal subunit protein uL2 (rpl8).